The chain runs to 196 residues: ATP-dependent Clp protease proteolytic subunit (196 aa).

Ser96 functions as the Nucleophile in the catalytic mechanism. Residue His121 is part of the active site.

It belongs to the peptidase S14 family. In terms of assembly, fourteen ClpP subunits assemble into 2 heptameric rings which stack back to back to give a disk-like structure with a central cavity, resembling the structure of eukaryotic proteasomes.

It localises to the cytoplasm. The enzyme catalyses Hydrolysis of proteins to small peptides in the presence of ATP and magnesium. alpha-casein is the usual test substrate. In the absence of ATP, only oligopeptides shorter than five residues are hydrolyzed (such as succinyl-Leu-Tyr-|-NHMec, and Leu-Tyr-Leu-|-Tyr-Trp, in which cleavage of the -Tyr-|-Leu- and -Tyr-|-Trp bonds also occurs).. Its function is as follows. Cleaves peptides in various proteins in a process that requires ATP hydrolysis. Has a chymotrypsin-like activity. Plays a major role in the degradation of misfolded proteins. The chain is ATP-dependent Clp protease proteolytic subunit from Streptococcus sanguinis (strain SK36).